We begin with the raw amino-acid sequence, 400 residues long: Tryptophan synthase beta chain (400 aa).

The residue at position 91 (Lys91) is an N6-(pyridoxal phosphate)lysine.

It belongs to the TrpB family. In terms of assembly, tetramer of two alpha and two beta chains. Requires pyridoxal 5'-phosphate as cofactor.

The enzyme catalyses (1S,2R)-1-C-(indol-3-yl)glycerol 3-phosphate + L-serine = D-glyceraldehyde 3-phosphate + L-tryptophan + H2O. It functions in the pathway amino-acid biosynthesis; L-tryptophan biosynthesis; L-tryptophan from chorismate: step 5/5. Its function is as follows. The beta subunit is responsible for the synthesis of L-tryptophan from indole and L-serine. The sequence is that of Tryptophan synthase beta chain from Listeria monocytogenes serovar 1/2a (strain ATCC BAA-679 / EGD-e).